Here is a 266-residue protein sequence, read N- to C-terminus: Serine/arginine-rich splicing factor 12 (266 aa).

Residues 42 to 266 are disordered; the sequence is ARPRRPRAPR…SRSYHHKNSW (225 aa). A compositionally biased stretch (basic residues) spans 43 to 62; that stretch reads RPRRPRAPRPRLRLRGRPGR. Residues 102–114 show a composition bias toward basic and acidic residues; sequence KSKERHLCSPSDH. The span at 115–127 shows a compositional bias: basic residues; the sequence is RRSRSPSQRRSRS. The segment covering 133–144 has biased composition (basic and acidic residues); the sequence is GRDRRHSDSLKE. The span at 151–166 shows a compositional bias: low complexity; it reads SYSQSKSRSKSLPRQS. Residues 183-194 are compositionally biased toward basic residues; it reads GRSRSKSLPKRS. Composition is skewed to polar residues over residues 202-212 and 235-244; these read SRSPQKQTGSG and AYTSSGSKTQ. Residues 245 to 266 show a composition bias toward basic residues; the sequence is TTKHSHLRSHSRSRSYHHKNSW.

It belongs to the splicing factor SR family.

The protein resides in the nucleus. Splicing factor that seems to antagonize SR proteins in pre-mRNA splicing regulation. This Mus musculus (Mouse) protein is Serine/arginine-rich splicing factor 12 (Srsf12).